A 420-amino-acid chain; its full sequence is 5'-deoxyadenosine deaminase (420 aa).

The Zn(2+) site is built by His-55 and His-57. Glu-84 and His-176 together coordinate substrate. His-203 contacts Zn(2+). Substrate-binding residues include Glu-206 and Asp-292. Asp-292 provides a ligand contact to Zn(2+).

It belongs to the metallo-dependent hydrolases superfamily. MTA/SAH deaminase family. As to quaternary structure, homotetramer. Zn(2+) is required as a cofactor.

It catalyses the reaction 5'-deoxyadenosine + H2O + H(+) = 5'-deoxyinosine + NH4(+). It carries out the reaction S-adenosyl-L-homocysteine + H2O + H(+) = S-inosyl-L-homocysteine + NH4(+). The enzyme catalyses S-methyl-5'-thioadenosine + H2O + H(+) = S-methyl-5'-thioinosine + NH4(+). The catalysed reaction is adenosine + H2O + H(+) = inosine + NH4(+). The protein operates within amino-acid biosynthesis; S-adenosyl-L-methionine biosynthesis. In terms of biological role, catalyzes the deamination of three SAM-derived enzymatic products, namely 5'-deoxyadenosine, S-adenosyl-L-homocysteine, and 5'-methylthioadenosine, to produce the inosine analogs. Can also deaminate adenosine. The preferred substrate for this enzyme is 5'-deoxyadenosine, but all these substrates are efficiently deaminated. Likely functions in a S-adenosyl-L-methionine (SAM) recycling pathway from S-adenosyl-L-homocysteine (SAH) produced from SAM-dependent methylation reactions. May also be involved in the recycling of 5'-deoxyadenosine, whereupon the 5'-deoxyribose moiety of 5'-deoxyinosine is further metabolized to deoxyhexoses used for the biosynthesis of aromatic amino acids in methanogens. The chain is 5'-deoxyadenosine deaminase from Methanocaldococcus jannaschii (strain ATCC 43067 / DSM 2661 / JAL-1 / JCM 10045 / NBRC 100440) (Methanococcus jannaschii).